A 353-amino-acid chain; its full sequence is Photosystem II D2 protein (353 aa).

N-acetylthreonine is present on Thr2. Phosphothreonine is present on Thr2. The helical transmembrane segment at Cys41–Thr61 threads the bilayer. His118 provides a ligand contact to chlorophyll a. A helical membrane pass occupies residues Gly125–Pro141. The pheophytin a site is built by Gln130 and Asn143. Residues Val153–Ser166 form a helical membrane-spanning segment. His198 provides a ligand contact to chlorophyll a. The chain crosses the membrane as a helical span at residues Ala208–Asp228. Residues His215 and Phe262 each coordinate a plastoquinone. Fe cation is bound at residue His215. Residue His269 coordinates Fe cation. A helical membrane pass occupies residues Gly279 to Arg295.

This sequence belongs to the reaction center PufL/M/PsbA/D family. PSII is composed of 1 copy each of membrane proteins PsbA, PsbB, PsbC, PsbD, PsbE, PsbF, PsbH, PsbI, PsbJ, PsbK, PsbL, PsbM, PsbT, PsbX, PsbY, PsbZ, Psb30/Ycf12, at least 3 peripheral proteins of the oxygen-evolving complex and a large number of cofactors. It forms dimeric complexes. Requires The D1/D2 heterodimer binds P680, chlorophylls that are the primary electron donor of PSII, and subsequent electron acceptors. It shares a non-heme iron and each subunit binds pheophytin, quinone, additional chlorophylls, carotenoids and lipids. There is also a Cl(-1) ion associated with D1 and D2, which is required for oxygen evolution. The PSII complex binds additional chlorophylls, carotenoids and specific lipids. as cofactor.

The protein resides in the plastid. It localises to the chloroplast thylakoid membrane. The catalysed reaction is 2 a plastoquinone + 4 hnu + 2 H2O = 2 a plastoquinol + O2. Its function is as follows. Photosystem II (PSII) is a light-driven water:plastoquinone oxidoreductase that uses light energy to abstract electrons from H(2)O, generating O(2) and a proton gradient subsequently used for ATP formation. It consists of a core antenna complex that captures photons, and an electron transfer chain that converts photonic excitation into a charge separation. The D1/D2 (PsbA/PsbD) reaction center heterodimer binds P680, the primary electron donor of PSII as well as several subsequent electron acceptors. D2 is needed for assembly of a stable PSII complex. In Cicer arietinum (Chickpea), this protein is Photosystem II D2 protein.